The following is a 243-amino-acid chain: Glutathione S-transferase U14 (243 aa).

One can recognise a GST N-terminal domain in the interval 5–87; it reads DTVKLIGCSD…YLDEAWPSDP (83 aa). Glutathione-binding positions include 15 to 16, 44 to 45, 58 to 59, and 71 to 72; these read DP, EK, KT, and ES. The 128-residue stretch at 93–220 folds into the GST C-terminal domain; that stretch reads NAYDRASARF…MPTVEEVTEL (128 aa). A Phosphothreonine modification is found at Thr159.

This sequence belongs to the GST superfamily. Tau family.

It is found in the cytoplasm. The protein localises to the cytosol. The catalysed reaction is RX + glutathione = an S-substituted glutathione + a halide anion + H(+). Functionally, may be involved in the conjugation of reduced glutathione to a wide number of exogenous and endogenous hydrophobic electrophiles and have a detoxification role against certain herbicides. This chain is Glutathione S-transferase U14 (GSTU14), found in Arabidopsis thaliana (Mouse-ear cress).